A 123-amino-acid polypeptide reads, in one-letter code: Large ribosomal subunit protein uL29 (123 aa).

The protein belongs to the universal ribosomal protein uL29 family. As to quaternary structure, component of the large ribosomal subunit.

The protein localises to the cytoplasm. Functionally, component of the large ribosomal subunit. The ribosome is a large ribonucleoprotein complex responsible for the synthesis of proteins in the cell. This is Large ribosomal subunit protein uL29 (rpl35) from Ictalurus punctatus (Channel catfish).